The primary structure comprises 443 residues: Threonine/serine transporter TdcC (443 aa).

Helical transmembrane passes span 22–42 (TTWT…FFPI), 44–64 (AGFG…PIAF), 97–117 (GVVI…IYGV), 140–160 (FVAL…KDLM), 163–183 (VMSY…LSLI), 207–227 (ILVT…FSPI), 259–279 (ASML…FTLS), 319–339 (ASII…LGTL), 366–386 (ISMI…PNIL), 389–409 (IEAM…MYAI), and 423–443 (DNVF…YKLF).

It belongs to the amino acid/polyamine transporter 2 family. SdaC/TdcC subfamily.

It localises to the cell inner membrane. The enzyme catalyses L-threonine(in) + H(+)(in) = L-threonine(out) + H(+)(out). It catalyses the reaction L-serine(in) + H(+)(in) = L-serine(out) + H(+)(out). In terms of biological role, involved in the import of threonine and serine into the cell, with the concomitant import of a proton (symport system). In Salmonella paratyphi B (strain ATCC BAA-1250 / SPB7), this protein is Threonine/serine transporter TdcC.